A 165-amino-acid chain; its full sequence is MVFITKFARIGLQAARQLSVTPLGAVQARAIHLTSLLAKERRYTNKHEWVEVVSGSNAIVGISSYAQEALGDVVFAQLPEPGTELKQDDECGALESVKAASEVYSPVSGKVIEKNAEVEDTPALVNSSCYEKGWLFKVDLKNPKELEALMTEDQYKAFLSSSGDH.

The Lipoyl-binding domain occupies 57 to 139; the sequence is NAIVGISSYA…YEKGWLFKVD (83 aa). Residue Lys-98 is modified to N6-lipoyllysine.

It belongs to the GcvH family. In terms of assembly, the glycine cleavage system is composed of four proteins: P, T, L and H. It depends on (R)-lipoate as a cofactor.

It is found in the mitochondrion. Its function is as follows. The glycine cleavage system catalyzes the degradation of glycine. The H protein shuttles the methylamine group of glycine from the P protein to the T protein. This chain is Glycine cleavage system H protein, mitochondrial (ppl), found in Drosophila melanogaster (Fruit fly).